Reading from the N-terminus, the 278-residue chain is C-type lectin domain family 1 member A (278 aa).

The interval 1-42 is disordered; sequence MLAKYSSTRDMLDADGDTTMSLHSQASATSQRPELGHTEHQR. The Cytoplasmic segment spans residues 1–52; that stretch reads MLAKYSSTRDMLDADGDTTMSLHSQASATSQRPELGHTEHQRPSSAWRPVAL. Residues 18-32 are compositionally biased toward polar residues; the sequence is TTMSLHSQASATSQR. A helical; Signal-anchor for type II membrane protein transmembrane segment spans residues 53 to 73; sequence ILLTLCLVLLIGLAALGLVFF. Topologically, residues 74–278 are extracellular; the sequence is QFYQLSNTQQ…LHEPLSRRWR (205 aa). 2 N-linked (GlcNAc...) asparagine glycosylation sites follow: asparagine 95 and asparagine 169. Residues 144 to 258 enclose the C-type lectin domain; sequence HGDKCYQFYK…CRELRRCACE (115 aa). 2 cysteine pairs are disulfide-bonded: cysteine 165/cysteine 257 and cysteine 236/cysteine 249.

The protein localises to the membrane. This Bos taurus (Bovine) protein is C-type lectin domain family 1 member A (CLEC1A).